The primary structure comprises 237 residues: Mitochondrial inner membrane protease atp23 (237 aa).

The span at 1–18 (MSTSESSNNGSQPGNQDT) shows a compositional bias: polar residues. Residues 1 to 24 (MSTSESSNNGSQPGNQDTGYIPGD) are disordered. A divalent metal cation is bound at residue His-136. Residue Glu-137 is part of the active site. Residue His-140 participates in a divalent metal cation binding.

This sequence belongs to the peptidase M76 family.

Its subcellular location is the mitochondrion inner membrane. Its function is as follows. Has a dual role in the assembly of mitochondrial ATPase. Acts as a protease that removes N-terminal residues of mitochondrial ATPase CF(0) subunit 6 at the intermembrane space side. Also involved in the correct assembly of the membrane-embedded ATPase CF(0) particle, probably mediating association of subunit 6 with the subunit 9 ring. In Aspergillus niger (strain ATCC MYA-4892 / CBS 513.88 / FGSC A1513), this protein is Mitochondrial inner membrane protease atp23 (atp23).